The sequence spans 436 residues: UDP-N-acetylmuramate--L-alanine ligase (436 aa).

Residue 110–116 (GAHGKTS) coordinates ATP.

The protein belongs to the MurCDEF family.

Its subcellular location is the cytoplasm. It catalyses the reaction UDP-N-acetyl-alpha-D-muramate + L-alanine + ATP = UDP-N-acetyl-alpha-D-muramoyl-L-alanine + ADP + phosphate + H(+). The protein operates within cell wall biogenesis; peptidoglycan biosynthesis. In terms of biological role, cell wall formation. The polypeptide is UDP-N-acetylmuramate--L-alanine ligase (Lacticaseibacillus paracasei (strain ATCC 334 / BCRC 17002 / CCUG 31169 / CIP 107868 / KCTC 3260 / NRRL B-441) (Lactobacillus paracasei)).